Reading from the N-terminus, the 487-residue chain is Serralysin (487 aa).

Positions 1 to 16 are excised as a propeptide; sequence MQSTKKAIEITESNFA. Residue histidine 192 participates in Zn(2+) binding. Glutamate 193 is a catalytic residue. 3 residues coordinate Zn(2+): histidine 196, histidine 202, and tyrosine 232. 32 residues coordinate Ca(2+): arginine 269, glycine 271, threonine 273, aspartate 301, glycine 303, glycine 304, aspartate 306, threonine 343, glutamate 345, glycine 350, glycine 352, aspartate 354, asparagine 359, alanine 361, asparagine 363, glycine 367, glycine 368, alanine 369, aspartate 372, glycine 376, glycine 377, glycine 378, glycine 379, aspartate 381, glycine 385, glycine 386, alanine 387, glycine 388, aspartate 390, aspartate 399, aspartate 406, and aspartate 416. 2 Hemolysin-type calcium-binding repeats span residues 348–365 and 366–383; these read IGGS…NNVL and KGGA…ADEL.

Belongs to the peptidase M10B family. Ca(2+) serves as cofactor. The cofactor is Zn(2+).

It localises to the secreted. The catalysed reaction is Preferential cleavage of bonds with hydrophobic residues in P1'.. Functionally, naturally present in the silkworm intestine and allows the emerging moth to dissolve its cocoon. This Serratia marcescens (strain ATCC 21074 / E-15) protein is Serralysin.